Reading from the N-terminus, the 353-residue chain is Virulence plasmid protein pGP2-D (353 aa).

This is Virulence plasmid protein pGP2-D from Chlamydia muridarum (strain MoPn / Nigg).